The chain runs to 449 residues: Probable aminotransferase TAT1 (449 aa).

Over residues 1–12 the composition is skewed to polar residues; it reads MNHNSNLVLPSH. Positions 1 to 20 are disordered; that stretch reads MNHNSNLVLPSHQTETQTQD.

It belongs to the class-I pyridoxal-phosphate-dependent aminotransferase family. The cofactor is pyridoxal 5'-phosphate.

The chain is Probable aminotransferase TAT1 from Arabidopsis thaliana (Mouse-ear cress).